The following is a 104-amino-acid chain: Endogenous retrovirus group K member 21 Rec protein (104 aa).

Residues 1-48 form a disordered region; it reads MHPSEMQRKAPPRRRRHRNRAPLTHKMNKMVTSEQMKLPSTKKAEPPT. A compositionally biased stretch (basic residues) spans 10–20; the sequence is APPRRRRHRNR. Positions 13–20 match the Nuclear localization signal motif; sequence RRRRHRNR. A Nuclear export signal motif is present at residues 49–58; the sequence is WAQLKKLTQL.

Forms homodimers, homotrimers, and homotetramers via a C-terminal domain. Associates with XPO1 and with ZNF145.

The protein resides in the cytoplasm. It localises to the nucleus. Its subcellular location is the nucleolus. In terms of biological role, retroviral replication requires the nuclear export and translation of unspliced, singly-spliced and multiply-spliced derivatives of the initial genomic transcript. Rec interacts with a highly structured RNA element (RcRE) present in the viral 3'LTR and recruits the cellular nuclear export machinery. This permits export to the cytoplasm of unspliced genomic or incompletely spliced subgenomic viral transcripts. The protein is Endogenous retrovirus group K member 21 Rec protein (ERVK-21) of Homo sapiens (Human).